A 214-amino-acid polypeptide reads, in one-letter code: Probable nicotinate-nucleotide adenylyltransferase (214 aa).

The protein belongs to the NadD family.

The catalysed reaction is nicotinate beta-D-ribonucleotide + ATP + H(+) = deamido-NAD(+) + diphosphate. Its pathway is cofactor biosynthesis; NAD(+) biosynthesis; deamido-NAD(+) from nicotinate D-ribonucleotide: step 1/1. Catalyzes the reversible adenylation of nicotinate mononucleotide (NaMN) to nicotinic acid adenine dinucleotide (NaAD). The polypeptide is Probable nicotinate-nucleotide adenylyltransferase (Pseudomonas paraeruginosa (strain DSM 24068 / PA7) (Pseudomonas aeruginosa (strain PA7))).